A 359-amino-acid chain; its full sequence is Medium-wave-sensitive opsin 1 (359 aa).

Over 1–47 the chain is Extracellular; that stretch reads MAQRLTGEQTLDHYEDSTHASIFTYTNSNSTKGPFEGPNYHIAPRWV. Residues 12–38 are required for 11-cis-retinal regeneration; sequence DHYEDSTHASIFTYTNSNSTKGPFEGP. The N-linked (GlcNAc...) asparagine glycan is linked to Asn29. The chain crosses the membrane as a helical span at residues 48-72; that stretch reads YHLTSTWMILVVVASVFTNGLVLAA. The Cytoplasmic portion of the chain corresponds to 73–84; the sequence is TMRFKKLRHPLN. A helical transmembrane segment spans residues 85 to 110; the sequence is WILVNLAVADLAETIIASTISVVNQI. The Extracellular portion of the chain corresponds to 111–124; the sequence is YGYFVLGHPLCVIE. A disulfide bond links Cys121 and Cys198. Residues 125-144 traverse the membrane as a helical segment; it reads GYIVSLCGITGLWSLAIISW. The Cytoplasmic segment spans residues 145-163; it reads ERWLVVCKPFGNVRFDAKL. A helical membrane pass occupies residues 164–187; the sequence is ATVGIVFSWVWAAIWTAPPIFGWS. The Extracellular portion of the chain corresponds to 188 to 213; it reads RYWPYGLKTSCGPDVFSGTSYPGVQS. The helical transmembrane segment at 214–241 threads the bilayer; sequence YMMVLMVTCCIFPLSIIVLCYLQVWLAI. Residues 242-263 lie on the Cytoplasmic side of the membrane; that stretch reads RAVAKQQKESESTQKAEKEVTR. A helical membrane pass occupies residues 264-287; it reads MVVVMVFAYCLCWGPYTFFACFAT. The Extracellular segment spans residues 288 to 295; it reads AHPGYAFH. The chain crosses the membrane as a helical span at residues 296–320; that stretch reads PLVASLPSYFAKSATIYNPIIYVFM. N6-(retinylidene)lysine is present on Lys307. Topologically, residues 321–359 are cytoplasmic; it reads NRQFRNCILHLFGKKVDDSSELSSTSKTEVSSVSSVSPA.

It belongs to the G-protein coupled receptor 1 family. Opsin subfamily. In terms of assembly, monomer. Homodimer. Homotetramer. Post-translationally, N-glycosylated. O-glycosylated. Phosphorylated on some or all of the serine and threonine residues present in the C-terminal region. Expressed in retina (at protein level). Expressed in cone photoreceptor cells (at protein level).

The protein localises to the cell membrane. Functionally, visual pigments are the light-absorbing molecules that mediate vision. They consist of an apoprotein, opsin, covalently linked to cis-retinal. May increase spectral sensitivity in dim light. In Mus musculus (Mouse), this protein is Medium-wave-sensitive opsin 1 (Opn1mw).